The chain runs to 306 residues: Dihydroorotate dehydrogenase B (NAD(+)), catalytic subunit (306 aa).

FMN-binding positions include Ser-24 and 48-49 (KA). Residues Lys-48 and 72–76 (NAIGL) contribute to the substrate site. FMN contacts are provided by Asn-102 and Asn-130. Asn-130 contributes to the substrate binding site. Cys-133 (nucleophile) is an active-site residue. Positions 168 and 194 each coordinate FMN. Position 195 to 196 (195 to 196 (NT)) interacts with substrate. FMN-binding positions include Gly-220, 246-247 (GG), and 268-269 (GT).

The protein belongs to the dihydroorotate dehydrogenase family. Type 1 subfamily. In terms of assembly, heterotetramer of 2 PyrK and 2 PyrD type B subunits. The cofactor is FMN.

It localises to the cytoplasm. The catalysed reaction is (S)-dihydroorotate + NAD(+) = orotate + NADH + H(+). It functions in the pathway pyrimidine metabolism; UMP biosynthesis via de novo pathway; orotate from (S)-dihydroorotate (NAD(+) route): step 1/1. Its function is as follows. Catalyzes the conversion of dihydroorotate to orotate with NAD(+) as electron acceptor. The polypeptide is Dihydroorotate dehydrogenase B (NAD(+)), catalytic subunit (pyrD) (Malacoplasma penetrans (strain HF-2) (Mycoplasma penetrans)).